Reading from the N-terminus, the 122-residue chain is MLPSMSLPSLXWMLLSCLMLLSQVQGEDSPADTPSARISCPKGSMAYASYCYALFITPKTWMGADMACQKRPSGHLVSVLSGAEASFVSSLIKNNLNALSDVWIGLHDPTEGLEPNAGGWEW.

The N-terminal stretch at 1-26 is a signal peptide; sequence MLPSMSLPSLXWMLLSCLMLLSQVQG. Positions 27–37 are excised as a propeptide; the sequence is EDSPADTPSAR. The region spanning 38 to 122 is the C-type lectin domain; the sequence is ISCPKGSMAY…LEPNAGGWEW (85 aa). The cysteines at positions 40 and 51 are disulfide-linked.

As to quaternary structure, cleaved to give an A chain and a B chain joined by a disulfide bond. As to expression, in pancreatic acinar cells.

Its subcellular location is the secreted. Might act as an inhibitor of spontaneous calcium carbonate precipitation. The chain is Lithostathine (PTP) from Sus scrofa (Pig).